A 148-amino-acid polypeptide reads, in one-letter code: Mediator of RNA polymerase II transcription subunit 31 (148 aa).

This sequence belongs to the Mediator complex subunit 31 family. As to quaternary structure, component of the Mediator complex.

The protein resides in the nucleus. In terms of biological role, component of the Mediator complex, a coactivator involved in the regulated transcription of nearly all RNA polymerase II-dependent genes. Mediator functions as a bridge to convey information from gene-specific regulatory proteins to the basal RNA polymerase II transcription machinery. Mediator is recruited to promoters by direct interactions with regulatory proteins and serves as a scaffold for the assembly of a functional preinitiation complex with RNA polymerase II and the general transcription factors. The sequence is that of Mediator of RNA polymerase II transcription subunit 31 from Taenia solium (Pork tapeworm).